The chain runs to 513 residues: MATSSSAWLIFSDHYREILIAIACLVVFSLLRSARSSSKGGLPYNWPIFGMLPAIISNNQFNDFTTARLRKMGWTFIFKGPWLLDMDYIFTCDPSNINHMFNDNFENYPKGELGKVFDIFGNNIFNADGDLWHDHRKMAQTILWDGNYRTMQATFIRNKMDNALIPILDSAACKRNPVDLQDVLLRFTFDTSCFSVLAADPESLTMEFPPVPFSKAADQALDAALTRHITPRLIWKLKRFFNVGSERTLAVAWKVIDSYIYDKIAELKAKRKLVGKINSYDAVSFYMDNFNIHDDKFLRDNAFTYLLAQRNTQSLTMTWLFYALFENPKVELKILSELKSIVDESSERKFNDGFALFDSNMIQSAIYLHATLCEALRIYPPVPFEIKDAHKADVLPSGHKVRAGEKILFSPYAMARMKGIWGDDCLEFKPERWITGNGTLKHEPAYKFFAFSAGPRICLGKELSFTQMKMVVATIIYNFHLQMVKGHVVEQSNSILMDMKHGLMVQVRKRSVM.

Residues 18 to 34 (ILIAIACLVVFSLLRSA) form a helical membrane-spanning segment. Heme is bound at residue cysteine 458.

It belongs to the cytochrome P450 family. The cofactor is heme. In terms of tissue distribution, mostly expressed in stems, and, to a lower extent, in bulbs, roots, leaves and flowers.

Its subcellular location is the membrane. The catalysed reaction is 4'-O-methylnorbelladine + reduced [NADPH--hemoprotein reductase] + O2 = (10bR,4aS)-noroxomaritidine + oxidized [NADPH--hemoprotein reductase] + 2 H2O + H(+). It carries out the reaction 4'-O-methylnorbelladine + reduced [NADPH--hemoprotein reductase] + O2 = (10bS,4aR)-noroxomaritidine + oxidized [NADPH--hemoprotein reductase] + 2 H2O + H(+). It participates in alkaloid biosynthesis. In terms of biological role, cytochrome P450 that catalyzes an intramolecular para-para' C-C phenol coupling of 4'-O-methylnorbelladine in alkaloids biosynthesis, including haemanthamine- and crinamine-type alkaloids, promising anticancer agents. Catalyzes the formation of (10bR,4aS)-noroxomaritidine and (10bS,4aR)-noroxomaritidine from 4'-O-methylnorbelladine. This Narcissus pseudonarcissus (Daffodil) protein is Noroxomaritidine synthase 1.